Consider the following 156-residue polypeptide: uncharacterized protein (156 aa).

This is an uncharacterized protein from Aedes vexans (Inland floodwater mosquito).